Here is a 371-residue protein sequence, read N- to C-terminus: Ferredoxin--NADP reductase, apicoplast (371 aa).

The transit peptide at 1–18 (MKIRFVFILSVLISGVCC) directs the protein to the apicoplast. FAD contacts are provided by residues Lys-68, 155 to 159 (ARLYS), 172 to 179 (AIKIHKYE), 192 to 194 (YCS), and Thr-235. The FAD-binding FR-type domain maps to 68–218 (KNPLKCKIVD…TGAHGYFNLP (151 aa)). Lys-174 contributes to the NADP(+) binding site. Residues 272-273 (VY), Ser-302, 313-315 (YVQ), and 341-343 (HKS) each bind NADP(+). FAD is bound by residues Lys-342 and Tyr-371.

The protein belongs to the ferredoxin--NADP reductase type 1 family. In terms of assembly, monomer. Homodimer; disulfide linked. NADP binding accelerates formation of an inactive, disulfide-linked homodimer when the protein is exposed to air for 24 hours or more (in vitro); the physiological relevance of this is uncertain. It depends on FAD as a cofactor.

The protein resides in the plastid. Its subcellular location is the apicoplast. The catalysed reaction is 2 reduced [2Fe-2S]-[ferredoxin] + NADP(+) + H(+) = 2 oxidized [2Fe-2S]-[ferredoxin] + NADPH. Functionally, may play a role in the terminal step of the DOXP/MEP pathway for isoprenoid precursor biosynthesis. This Plasmodium falciparum (isolate 3D7) protein is Ferredoxin--NADP reductase, apicoplast.